Here is a 438-residue protein sequence, read N- to C-terminus: Chromosomal replication initiator protein DnaA (438 aa).

A domain I, interacts with DnaA modulators region spans residues 1–71; sequence MTELDSLWEA…VEIVYQRTGQ (71 aa). The tract at residues 71–101 is domain II; the sequence is QEIRPDYVLATDPTPLAQTPPRPQSTFKEET. Residues 81–100 are disordered; the sequence is TDPTPLAQTPPRPQSTFKEE. Residues 102–318 are domain III, AAA+ region; it reads PLNPEYTFQT…GALMRIRVFS (217 aa). 4 residues coordinate ATP: Gly146, Gly148, Lys149, and Thr150. The tract at residues 319 to 438 is domain IV, binds dsDNA; the sequence is ELHQQPITLK…LVKLKNDLQA (120 aa).

This sequence belongs to the DnaA family. In terms of assembly, oligomerizes as a right-handed, spiral filament on DNA at oriC.

It localises to the cytoplasm. Functionally, plays an essential role in the initiation and regulation of chromosomal replication. ATP-DnaA binds to the origin of replication (oriC) to initiate formation of the DNA replication initiation complex once per cell cycle. Binds the DnaA box (a 9 base pair repeat at the origin) and separates the double-stranded (ds)DNA. Forms a right-handed helical filament on oriC DNA; dsDNA binds to the exterior of the filament while single-stranded (ss)DNA is stabiized in the filament's interior. The ATP-DnaA-oriC complex binds and stabilizes one strand of the AT-rich DNA unwinding element (DUE), permitting loading of DNA polymerase. After initiation quickly degrades to an ADP-DnaA complex that is not apt for DNA replication. Binds acidic phospholipids. The sequence is that of Chromosomal replication initiator protein DnaA from Limosilactobacillus fermentum (strain NBRC 3956 / LMG 18251) (Lactobacillus fermentum).